Here is a 99-residue protein sequence, read N- to C-terminus: Nucleoid-associated protein MGAS2096_Spy1605 (99 aa).

The protein belongs to the YbaB/EbfC family. As to quaternary structure, homodimer.

It is found in the cytoplasm. Its subcellular location is the nucleoid. Functionally, binds to DNA and alters its conformation. May be involved in regulation of gene expression, nucleoid organization and DNA protection. The protein is Nucleoid-associated protein MGAS2096_Spy1605 of Streptococcus pyogenes serotype M12 (strain MGAS2096).